Consider the following 601-residue polypeptide: MKATGTFFFVVGPSGAGKDSLIDGARAALDGDYVFARRVITRPDGSAGEEHEGVTEAEFARRQRSGEFLVTWDAHDLRYGLPKSLMCELERGRNVVANGSRGVIAELAARLPRFVVVLVTAPHDVLARRIAARGRESGDQVASRVARAGAPVPPHVPCITVSNHSTLEAGTARFVEALRTGTRTSAAERPASRTNLMAKLRGEPLDEAAYVAVLQDAIAGRYTEAELTEFLVAATRTLTDEEVVALARARTAFTPRIDWDEPVVVDKHSMGGVPGSRITLIVVPIVAAYGLAMPKTSSRAITSAAGTADAMETIARVDLAHEDVRRCVAQARACIAWNGRLNHSVVDDVMNAITRPLRLDSRRWSVASILSKKYTAGATHVIVDLPYGPQTKLATRADAEALGALFEHVGKGLGLHVRALVTDGSGPIGRGIGPALEVRDVRLVLDNAPDAPADLRDKALRFAGEIIAFDPRVDSPEHGMQIAAALLHEGKARAAFDRIAAAQGVRCDPVAPGTHTLVVPATTRGRVAGVDGLQISGVARAAGAPRDGGAGVDMLCAIGAKVAPGQPLYRIHSDSAEALEAAAALVRAGGECCQAVRIDPD.

Residues 1–177 (MKATGTFFFV…EAGTARFVEA (177 aa)) form a ribose 1,5-bisphosphokinase region. Residues 178–601 (LRTGTRTSAA…CCQAVRIDPD (424 aa)) form a thymidinephosphorylase region.

In the N-terminal section; belongs to the ribose 1,5-bisphosphokinase family. This sequence in the C-terminal section; belongs to the thymidine/pyrimidine-nucleoside phosphorylase family. Type 2 subfamily.

The catalysed reaction is alpha-D-ribose 1,5-bisphosphate + ATP = 5-phospho-alpha-D-ribose 1-diphosphate + ADP. It carries out the reaction thymidine + phosphate = 2-deoxy-alpha-D-ribose 1-phosphate + thymine. It functions in the pathway metabolic intermediate biosynthesis; 5-phospho-alpha-D-ribose 1-diphosphate biosynthesis; 5-phospho-alpha-D-ribose 1-diphosphate from D-ribose 5-phosphate (route II): step 3/3. In terms of biological role, catalyzes the phosphorylation of ribose 1,5-bisphosphate to 5-phospho-D-ribosyl alpha-1-diphosphate (PRPP). The sequence is that of Bifunctional ribose 1,5-bisphosphokinase-thymidine phosphorylase (phnN) from Cupriavidus necator (strain ATCC 17699 / DSM 428 / KCTC 22496 / NCIMB 10442 / H16 / Stanier 337) (Ralstonia eutropha).